Reading from the N-terminus, the 213-residue chain is Pyridoxine/pyridoxamine 5'-phosphate oxidase (213 aa).

Residues R8–Y11 and K67 contribute to the substrate site. Residues R62 to K67, F77 to T78, R83, K84, and Q106 contribute to the FMN site. Substrate is bound by residues Y124, R128, and S132. FMN-binding positions include Q141–S142 and W186. Residue R192 to H194 coordinates substrate. R196 contacts FMN.

It belongs to the pyridoxamine 5'-phosphate oxidase family. In terms of assembly, homodimer. Requires FMN as cofactor.

It carries out the reaction pyridoxamine 5'-phosphate + O2 + H2O = pyridoxal 5'-phosphate + H2O2 + NH4(+). The enzyme catalyses pyridoxine 5'-phosphate + O2 = pyridoxal 5'-phosphate + H2O2. The protein operates within cofactor metabolism; pyridoxal 5'-phosphate salvage; pyridoxal 5'-phosphate from pyridoxamine 5'-phosphate: step 1/1. It functions in the pathway cofactor metabolism; pyridoxal 5'-phosphate salvage; pyridoxal 5'-phosphate from pyridoxine 5'-phosphate: step 1/1. In terms of biological role, catalyzes the oxidation of either pyridoxine 5'-phosphate (PNP) or pyridoxamine 5'-phosphate (PMP) into pyridoxal 5'-phosphate (PLP). This Shewanella sediminis (strain HAW-EB3) protein is Pyridoxine/pyridoxamine 5'-phosphate oxidase.